The chain runs to 465 residues: COP9 signalosome complex subunit 5 (465 aa).

The MPN domain maps to 74 to 216; the sequence is VLLSKLACSK…IGSFRTYQDQ (143 aa). Zn(2+) contacts are provided by H162, H164, and D175. The short motif at 162 to 175 is the JAMM motif element; that stretch reads HSHPGYDCWLSNID. The interval 364-386 is disordered; it reads SSIHTQMNNQNNQQERNSPKRPH.

Belongs to the peptidase M67A family. CSN5 subfamily. As to quaternary structure, component of the COP9 signalosome (CSN) complex.

The protein localises to the cytoplasm. It is found in the nucleus. Its function is as follows. Catalytic Component of the COP9 signalosome (CSN) complex that acts as an regulator of the ubiquitin (Ubl) conjugation pathway by mediating the deneddylation of the cullin subunit of SCF-type E3 ubiquitin-protein ligase complexes. This chain is COP9 signalosome complex subunit 5 (RRI1), found in Candida glabrata (strain ATCC 2001 / BCRC 20586 / JCM 3761 / NBRC 0622 / NRRL Y-65 / CBS 138) (Yeast).